A 129-amino-acid chain; its full sequence is Small ribosomal subunit protein uS13m (129 aa).

Residues 92–129 are disordered; that stretch reads HQDGSPLRGQRTHTNARTARKQIRKGNERRLPKEQATD. Residues 116 to 129 are compositionally biased toward basic and acidic residues; sequence KGNERRLPKEQATD.

It belongs to the universal ribosomal protein uS13 family. Part of the small ribosomal subunit.

Its subcellular location is the mitochondrion. Located at the top of the head of the small subunit, it contacts several helices of the 18S rRNA. The chain is Small ribosomal subunit protein uS13m (RPS13) from Zea mays (Maize).